The chain runs to 31 residues: Cytochrome b6-f complex subunit 6 (31 aa).

A helical membrane pass occupies residues 4-24; sequence IISYFLFLIGALTLALVLFIG.

The protein belongs to the PetL family. The 4 large subunits of the cytochrome b6-f complex are cytochrome b6, subunit IV (17 kDa polypeptide, PetD), cytochrome f and the Rieske protein, while the 4 small subunits are PetG, PetL, PetM and PetN. The complex functions as a dimer.

It is found in the plastid. The protein localises to the chloroplast thylakoid membrane. In terms of biological role, component of the cytochrome b6-f complex, which mediates electron transfer between photosystem II (PSII) and photosystem I (PSI), cyclic electron flow around PSI, and state transitions. PetL is important for photoautotrophic growth as well as for electron transfer efficiency and stability of the cytochrome b6-f complex. This chain is Cytochrome b6-f complex subunit 6, found in Marchantia polymorpha (Common liverwort).